The primary structure comprises 567 residues: ERO1-like protein 2 (567 aa).

The signal sequence occupies residues 1 to 22 (MKIAKGLVGLLILYKNVCQVLC). N-linked (GlcNAc...) asparagine glycosylation occurs at N49. Intrachain disulfides connect C88–C386, C98–C103, C154–C325, and C389–C392. Residues R188, T190, W201, S258, H261, and K290 each coordinate FAD. C389 functions as the Nucleophile in the catalytic mechanism. C392 is a catalytic residue. N546 carries N-linked (GlcNAc...) asparagine glycosylation.

The protein belongs to the EROs family. In terms of assembly, may function both as a monomer and a homodimer. The cofactor is FAD. In terms of processing, N-glycosylated.

The protein localises to the endoplasmic reticulum membrane. Functionally, essential oxidoreductase that oxidizes proteins in the endoplasmic reticulum to produce disulfide bonds. Acts by oxidizing directly pdi1 isomerase through a direct disulfide exchange. Does not act as a direct oxidant of folding substrate, but relies on pdi1 to transfer oxidizing equivalent. Does not oxidize all pdi related proteins, suggesting that it can discriminate between pdi1 and related proteins. Its reoxidation probably involves electron transfer to molecular oxygen via FAD. Acts independently of glutathione. May be responsible for a significant proportion of reactive oxygen species (ROS) in the cell, thereby being a source of oxidative stress. The protein is ERO1-like protein 2 (ero12) of Schizosaccharomyces pombe (strain 972 / ATCC 24843) (Fission yeast).